The following is a 441-amino-acid chain: Tubulin alpha chain (441 aa).

Positions 11, 68, 137, 141, 142, 176, 203, and 224 each coordinate GTP. E68 lines the Mg(2+) pocket. Residue E250 is part of the active site.

The protein belongs to the tubulin family. As to quaternary structure, dimer of alpha and beta chains. A typical microtubule is a hollow water-filled tube with an outer diameter of 25 nm and an inner diameter of 15 nM. Alpha-beta heterodimers associate head-to-tail to form protofilaments running lengthwise along the microtubule wall with the beta-tubulin subunit facing the microtubule plus end conferring a structural polarity. Microtubules usually have 13 protofilaments but different protofilament numbers can be found in some organisms and specialized cells. It depends on Mg(2+) as a cofactor.

Its subcellular location is the cytoplasm. It localises to the cytoskeleton. It catalyses the reaction GTP + H2O = GDP + phosphate + H(+). Functionally, tubulin is the major constituent of microtubules, a cylinder consisting of laterally associated linear protofilaments composed of alpha- and beta-tubulin heterodimers. Microtubules grow by the addition of GTP-tubulin dimers to the microtubule end, where a stabilizing cap forms. Below the cap, tubulin dimers are in GDP-bound state, owing to GTPase activity of alpha-tubulin. The polypeptide is Tubulin alpha chain (TUB1) (Encephalitozoon cuniculi (strain GB-M1) (Microsporidian parasite)).